The chain runs to 165 residues: Transcription antitermination protein NusB (165 aa).

It belongs to the NusB family.

Involved in transcription antitermination. Required for transcription of ribosomal RNA (rRNA) genes. Binds specifically to the boxA antiterminator sequence of the ribosomal RNA (rrn) operons. The protein is Transcription antitermination protein NusB of Bradyrhizobium diazoefficiens (strain JCM 10833 / BCRC 13528 / IAM 13628 / NBRC 14792 / USDA 110).